The sequence spans 619 residues: DNA mismatch repair protein MutL (619 aa).

This sequence belongs to the DNA mismatch repair MutL/HexB family.

Functionally, this protein is involved in the repair of mismatches in DNA. It is required for dam-dependent methyl-directed DNA mismatch repair. May act as a 'molecular matchmaker', a protein that promotes the formation of a stable complex between two or more DNA-binding proteins in an ATP-dependent manner without itself being part of a final effector complex. The protein is DNA mismatch repair protein MutL of Xylella fastidiosa (strain M23).